Here is a 367-residue protein sequence, read N- to C-terminus: UDP-N-acetylglucosamine--N-acetylmuramyl-(pentapeptide) pyrophosphoryl-undecaprenol N-acetylglucosamine transferase (367 aa).

Residues 15–17, asparagine 127, arginine 163, serine 191, isoleucine 249, and glutamine 294 contribute to the UDP-N-acetyl-alpha-D-glucosamine site; that span reads TGG.

This sequence belongs to the glycosyltransferase 28 family. MurG subfamily.

It is found in the cell inner membrane. The catalysed reaction is di-trans,octa-cis-undecaprenyl diphospho-N-acetyl-alpha-D-muramoyl-L-alanyl-D-glutamyl-meso-2,6-diaminopimeloyl-D-alanyl-D-alanine + UDP-N-acetyl-alpha-D-glucosamine = di-trans,octa-cis-undecaprenyl diphospho-[N-acetyl-alpha-D-glucosaminyl-(1-&gt;4)]-N-acetyl-alpha-D-muramoyl-L-alanyl-D-glutamyl-meso-2,6-diaminopimeloyl-D-alanyl-D-alanine + UDP + H(+). The protein operates within cell wall biogenesis; peptidoglycan biosynthesis. Its function is as follows. Cell wall formation. Catalyzes the transfer of a GlcNAc subunit on undecaprenyl-pyrophosphoryl-MurNAc-pentapeptide (lipid intermediate I) to form undecaprenyl-pyrophosphoryl-MurNAc-(pentapeptide)GlcNAc (lipid intermediate II). The chain is UDP-N-acetylglucosamine--N-acetylmuramyl-(pentapeptide) pyrophosphoryl-undecaprenol N-acetylglucosamine transferase from Burkholderia ambifaria (strain MC40-6).